We begin with the raw amino-acid sequence, 239 residues long: Ribosomal RNA small subunit methyltransferase G (239 aa).

S-adenosyl-L-methionine-binding positions include glycine 77, phenylalanine 82, alanine 128–glutamate 129, and arginine 147.

It belongs to the methyltransferase superfamily. RNA methyltransferase RsmG family.

The protein localises to the cytoplasm. Its function is as follows. Specifically methylates the N7 position of guanine in position 535 of 16S rRNA. This Bacillus anthracis (strain A0248) protein is Ribosomal RNA small subunit methyltransferase G.